Reading from the N-terminus, the 171-residue chain is MRAFLIGRWQPFHKGHLEIIKKISAEVDEIIVGIGSCQKSHTLTDPFTAGERMMMITKTLENYDINYYAIPIIDIDYNAVWVSSVESLTPPFTTIYTGNSLVRELFSERNYVVKKPELYNRTDYSGTKIRKKMLEGSAWEHLVPEEVVKVIEEIDGINRIRRLSEKDYDEE.

The protein belongs to the archaeal NMN adenylyltransferase family.

The protein localises to the cytoplasm. The catalysed reaction is beta-nicotinamide D-ribonucleotide + ATP + H(+) = diphosphate + NAD(+). It functions in the pathway cofactor biosynthesis; NAD(+) biosynthesis; NAD(+) from nicotinamide D-ribonucleotide: step 1/1. This chain is Nicotinamide-nucleotide adenylyltransferase, found in Methanococcus maripaludis (strain DSM 14266 / JCM 13030 / NBRC 101832 / S2 / LL).